Reading from the N-terminus, the 285-residue chain is Shikimate dehydrogenase (NADP(+)) (285 aa).

Residues 20–22 (SLS) and Thr67 each bind shikimate. The active-site Proton acceptor is the Lys71. NADP(+) is bound at residue Glu83. Residues Asn92 and Asp107 each coordinate shikimate. Residues 132–136 (GAGGA) and Leu230 contribute to the NADP(+) site. Tyr232 is a shikimate binding site. Residue Gly253 participates in NADP(+) binding.

The protein belongs to the shikimate dehydrogenase family. In terms of assembly, homodimer.

The catalysed reaction is shikimate + NADP(+) = 3-dehydroshikimate + NADPH + H(+). Its pathway is metabolic intermediate biosynthesis; chorismate biosynthesis; chorismate from D-erythrose 4-phosphate and phosphoenolpyruvate: step 4/7. Functionally, involved in the biosynthesis of the chorismate, which leads to the biosynthesis of aromatic amino acids. Catalyzes the reversible NADPH linked reduction of 3-dehydroshikimate (DHSA) to yield shikimate (SA). This Salinibacter ruber (strain DSM 13855 / M31) protein is Shikimate dehydrogenase (NADP(+)).